A 118-amino-acid chain; its full sequence is Protein TusC (118 aa).

This sequence belongs to the DsrF/TusC family. Heterohexamer, formed by a dimer of trimers. The hexameric TusBCD complex contains 2 copies each of TusB, TusC and TusD. The TusBCD complex interacts with TusE.

The protein resides in the cytoplasm. In terms of biological role, part of a sulfur-relay system required for 2-thiolation of 5-methylaminomethyl-2-thiouridine (mnm(5)s(2)U) at tRNA wobble positions. The sequence is that of Protein TusC from Salmonella arizonae (strain ATCC BAA-731 / CDC346-86 / RSK2980).